The primary structure comprises 441 residues: Serine carboxypeptidase-like 3 (441 aa).

The first 30 residues, 1–30 (MASNYVFSVLRSLLLLIHTVFLGQHHVSSA), serve as a signal peptide directing secretion. 3 cysteine pairs are disulfide-bonded: C88–C331, C252–C266, and C290–C297. N-linked (GlcNAc...) asparagine glycosylation occurs at N109. S184 is an active-site residue. N350 is a glycosylation site (N-linked (GlcNAc...) asparagine). D366 is an active-site residue. Residue N382 is glycosylated (N-linked (GlcNAc...) asparagine). H419 is a catalytic residue.

Belongs to the peptidase S10 family. Expressed in roots.

The protein localises to the secreted. In terms of biological role, probable carboxypeptidase. This chain is Serine carboxypeptidase-like 3 (SCPL3), found in Arabidopsis thaliana (Mouse-ear cress).